Here is a 947-residue protein sequence, read N- to C-terminus: Protocadherin alpha-4 (947 aa).

Residues 1–29 (MEFSWGSGQESQRLLLSFLFLAIWEPGNS) form the signal peptide. 6 consecutive Cadherin domains span residues 30 to 133 (QLHY…PPTF), 134 to 242 (PTTQ…SPVF), 243 to 350 (DRSL…APEL), 351 to 455 (EFKS…APAF), 456 to 565 (AQPE…APTL), and 573 to 681 (SGGI…APSR). Over 30–697 (QLHYSIPEEA…NAEASLVDVN (668 aa)) the chain is Extracellular. Cysteines 96 and 102 form a disulfide. N-linked (GlcNAc...) asparagine glycosylation is found at Asn257 and Asn265. N-linked (GlcNAc...) asparagine glycosylation occurs at Asn548. A helical transmembrane segment spans residues 698 to 718 (VYLIIAICAVSSLLVLTLLLY). The Cytoplasmic segment spans residues 719–947 (SALRCSTVPS…GNSTTDNSDQ (229 aa)). PXXP repeat units follow at residues 734–737 (PPKP), 774–777 (PSLS), 796–799 (PRQP), 829–832 (PGGP), 870–873 (PGNP), and 888–891 (PGSP). Residues 734 to 891 (PPKPVMVCSS…PDKFIIPGSP (158 aa)) form a 6 X 4 AA repeats of P-X-X-P region. The segment at 738–947 (VMVCSSAVGS…GNSTTDNSDQ (210 aa)) is required for interaction with FYN. Disordered stretches follow at residues 761–805 (GEYP…DWRY) and 824–853 (ILRA…EVSP). Positions 897–947 (RQESANNQIDKSDFITFGKKEETKKKKKKKKGNKTQEKKEKGNSTTDNSDQ) are disordered. A compositionally biased stretch (basic and acidic residues) spans 906–920 (DKSDFITFGKKEETK).

Forms homodimers in trans (molecules expressed by two different cells). Forms promiscuous heterodimers in cis (at the plasma membrane of the same cell) with other protocadherins. Interacts with FYN. Detected in brain.

The protein resides in the cell membrane. In terms of biological role, calcium-dependent cell-adhesion protein involved in cells self-recognition and non-self discrimination. Thereby, it is involved in the establishment and maintenance of specific neuronal connections in the brain. The polypeptide is Protocadherin alpha-4 (Rattus norvegicus (Rat)).